The sequence spans 503 residues: ATP synthase subunit alpha (503 aa).

Residue 170–177 coordinates ATP; that stretch reads GDKQTGKT.

The protein belongs to the ATPase alpha/beta chains family. As to quaternary structure, F-type ATPases have 2 components, CF(1) - the catalytic core - and CF(0) - the membrane proton channel. CF(1) has five subunits: alpha(3), beta(3), gamma(1), delta(1), epsilon(1). CF(0) has three main subunits: a(1), b(2) and c(9-12). The alpha and beta chains form an alternating ring which encloses part of the gamma chain. CF(1) is attached to CF(0) by a central stalk formed by the gamma and epsilon chains, while a peripheral stalk is formed by the delta and b chains.

It is found in the cell inner membrane. The enzyme catalyses ATP + H2O + 4 H(+)(in) = ADP + phosphate + 5 H(+)(out). In terms of biological role, produces ATP from ADP in the presence of a proton gradient across the membrane. The alpha chain is a regulatory subunit. This chain is ATP synthase subunit alpha, found in Helicobacter pylori (strain G27).